The chain runs to 290 residues: Transposon Ty3-G Gag polyprotein (290 aa).

The residue at position 2 (Ser2) is an N-acetylserine. A CCHC-type zinc finger spans residues 265–282 (RLCFYCKKEGHRLNECRA).

It is found in the cytoplasm. In terms of biological role, capsid protein (CA) is the structural component of the virus-like particle (VLP), forming the shell that encapsulates the retrotransposons dimeric RNA genome. Functionally, nucleocapsid protein p9 (NC) forms the nucleocore that coats the retro-elements dimeric RNA. Binds these RNAs through its zinc fingers. Promotes primer tRNA(i)-Met annealing to the multipartite primer-binding site (PBS), dimerization of Ty3 RNA and initiation of reverse transcription. The protein is Transposon Ty3-G Gag polyprotein (TY3A-G) of Saccharomyces cerevisiae (strain ATCC 204508 / S288c) (Baker's yeast).